Reading from the N-terminus, the 520-residue chain is Glutamate--cysteine ligase (520 aa).

Belongs to the glutamate--cysteine ligase type 1 family. Type 1 subfamily.

The enzyme catalyses L-cysteine + L-glutamate + ATP = gamma-L-glutamyl-L-cysteine + ADP + phosphate + H(+). Its pathway is sulfur metabolism; glutathione biosynthesis; glutathione from L-cysteine and L-glutamate: step 1/2. The protein is Glutamate--cysteine ligase of Leptospira interrogans serogroup Icterohaemorrhagiae serovar Lai (strain 56601).